A 454-amino-acid polypeptide reads, in one-letter code: Guanine deaminase (454 aa).

2 residues coordinate Zn(2+): His-82 and His-84. Substrate contacts are provided by residues 84 to 87 (HASQ), 213 to 214 (RF), 240 to 243 (HISE), and Asp-330. The Zn(2+) site is built by His-240 and Asp-330. The residue at position 453 (Ser-453) is a Phosphoserine.

Belongs to the metallo-dependent hydrolases superfamily. ATZ/TRZ family. Homodimer. Zn(2+) is required as a cofactor.

The enzyme catalyses guanine + H2O + H(+) = xanthine + NH4(+). Its pathway is purine metabolism; guanine degradation; xanthine from guanine: step 1/1. Catalyzes the hydrolytic deamination of guanine, producing xanthine and ammonia. The polypeptide is Guanine deaminase (Homo sapiens (Human)).